The sequence spans 352 residues: Protein TIFY 6B (352 aa).

Residues 1–71 form a disordered region; that stretch reads MERDFLGLGS…KSGNYHLPHS (71 aa). The span at 17–26 shows a compositional bias: basic and acidic residues; the sequence is VKEETSESSR. Positions 34 to 54 are enriched in polar residues; the sequence is MNWSFSNKVSASSSQFLSFRP. One can recognise a Tify domain in the interval 172–207; sequence PIGSPAQLTIFYAGSVCVYDDISPEKAKAIMLLAGN. A Jas motif is present at residues 302–326; that stretch reads PLARKASLARFLEKRKERVTSVSPY. The Nuclear localization signal motif lies at 304–311; the sequence is ARKASLAR.

The protein belongs to the TIFY/JAZ family. As to quaternary structure, homo- and heterodimer. Interacts with COI1, MYC2, MYC3, MYC4, TIFY10A/JAZ1, TIFY10B/JAZ2, TIFY6A/JAZ4, TIFY5A/JAZ8, TIFY7/JAZ9, TIFY9/JAZ10 and TIFY3A/JAZ11. Interacts (via TIFY domain) with AFPH2/NINJA. In terms of processing, ubiquitinated. Targeted for degradation by the SCF(COI1) E3 ubiquitin ligase-proteasome pathway during jasmonate signaling. Srtongly expressed in root tips.

Its subcellular location is the nucleus. In terms of biological role, repressor of jasmonate responses. Jasmonoyl-isoleucine (JA-Ile) specifically promotes COI1-TIFY6B/JAZ3 interaction. Acts as a negative regulator of MYC2 function. Feed-back regulated by MYC2. The protein is Protein TIFY 6B (TIFY6B) of Arabidopsis thaliana (Mouse-ear cress).